A 430-amino-acid chain; its full sequence is Bifunctional protein GlmU (430 aa).

The tract at residues 1–227 is pyrophosphorylase; sequence MISKTHTFVI…GEEATGINNR (227 aa). Residues lysine 25, glutamine 74, 79–80, 104–106, glycine 140, glutamate 154, asparagine 168, and asparagine 225 contribute to the UDP-N-acetyl-alpha-D-glucosamine site; these read GT and YGD. A Mg(2+)-binding site is contributed by aspartate 106. A Mg(2+)-binding site is contributed by asparagine 225. The tract at residues 228–248 is linker; that stretch reads NDLIKAEFYFQENKRKIFTDS. The segment at 249 to 430 is N-acetyltransferase; sequence GVTLVAPETV…REKQVTKRIK (182 aa). Residues arginine 314 and lysine 332 each coordinate UDP-N-acetyl-alpha-D-glucosamine. Histidine 344 acts as the Proton acceptor in catalysis. UDP-N-acetyl-alpha-D-glucosamine contacts are provided by tyrosine 347 and asparagine 358. Acetyl-CoA contacts are provided by residues alanine 361, 367-368, alanine 404, and arginine 421; that span reads NY.

The protein in the N-terminal section; belongs to the N-acetylglucosamine-1-phosphate uridyltransferase family. This sequence in the C-terminal section; belongs to the transferase hexapeptide repeat family. Homotrimer. Requires Mg(2+) as cofactor.

It is found in the cytoplasm. The enzyme catalyses alpha-D-glucosamine 1-phosphate + acetyl-CoA = N-acetyl-alpha-D-glucosamine 1-phosphate + CoA + H(+). The catalysed reaction is N-acetyl-alpha-D-glucosamine 1-phosphate + UTP + H(+) = UDP-N-acetyl-alpha-D-glucosamine + diphosphate. It functions in the pathway nucleotide-sugar biosynthesis; UDP-N-acetyl-alpha-D-glucosamine biosynthesis; N-acetyl-alpha-D-glucosamine 1-phosphate from alpha-D-glucosamine 6-phosphate (route II): step 2/2. Its pathway is nucleotide-sugar biosynthesis; UDP-N-acetyl-alpha-D-glucosamine biosynthesis; UDP-N-acetyl-alpha-D-glucosamine from N-acetyl-alpha-D-glucosamine 1-phosphate: step 1/1. The protein operates within bacterial outer membrane biogenesis; LPS lipid A biosynthesis. Functionally, catalyzes the last two sequential reactions in the de novo biosynthetic pathway for UDP-N-acetylglucosamine (UDP-GlcNAc). The C-terminal domain catalyzes the transfer of acetyl group from acetyl coenzyme A to glucosamine-1-phosphate (GlcN-1-P) to produce N-acetylglucosamine-1-phosphate (GlcNAc-1-P), which is converted into UDP-GlcNAc by the transfer of uridine 5-monophosphate (from uridine 5-triphosphate), a reaction catalyzed by the N-terminal domain. The chain is Bifunctional protein GlmU from Wolbachia pipientis wMel.